A 438-amino-acid polypeptide reads, in one-letter code: MSMDIIKGNLDGISKPASSSRSRPGSRSSNGSLEVLSPEPGPVKIDMVNKLNSGKEGHTSDSRVEERRKISDDEWADNPRSTEPAQESSDEDSNLSQPQGTPEHSDDPKLEGTDAVLQNAIHKMHRLDKILAKRRIREKEIKKQGLEMRIKLWEELKSAKNTEDLENDEELENTKKFLYLTSKSAGTAAEPLHCKFEDDLFSVFHTQIPQETYENHTEKDFTCDVEKNGPLIKTEKQPFSNTEAIEPRSEHSQVFIIRNAEHSQDFIKRNIELAKSSRSPVVMVEGEKKRLDELLKGLEDTDSGLSSSEGDQCAWLVPGEGYTLAATESQQLAEIDIKLQELSVDSPAVFSLESQSNKGDMEHDSNEERNTEPTPGEKILRDNKEQRDRESRLRAIDGKLKEINEQVEECPVITPGKRNERITWRWLLAKILEPECKV.

The disordered stretch occupies residues 1–111 (MSMDIIKGNL…PEHSDDPKLE (111 aa)). Positions 18–32 (SSSRSRPGSRSSNGS) are enriched in low complexity. Residues 53–72 (SGKEGHTSDSRVEERRKISD) show a composition bias toward basic and acidic residues. 3 positions are modified to phosphoserine: Ser-71, Ser-88, and Ser-89. The stretch at 131 to 157 (LAKRRIREKEIKKQGLEMRIKLWEELK) forms a coiled coil. A disordered region spans residues 354-390 (SQSNKGDMEHDSNEERNTEPTPGEKILRDNKEQRDRE). 2 stretches are compositionally biased toward basic and acidic residues: residues 359 to 371 (GDMEHDSNEERNT) and 378 to 390 (KILRDNKEQRDRE).

This sequence belongs to the FSIP1 family.

The chain is Fibrous sheath-interacting protein 1 (Fsip1) from Rattus norvegicus (Rat).